The primary structure comprises 309 residues: Mitogen-activated protein kinase kinase 8 (309 aa).

Positions 53–305 (LDRISVLGSG…ASQLLNHPFL (253 aa)) constitute a Protein kinase domain. Residues 59–67 (LGSGNGGTV) and Lys82 contribute to the ATP site. Catalysis depends on Asp167, which acts as the Proton acceptor. A phosphoserine mark is found at Ser195 and Ser201. Thr205 carries the phosphothreonine modification.

It belongs to the protein kinase superfamily. STE Ser/Thr protein kinase family. MAP kinase kinase subfamily. Post-translationally, phosphorylation at Ser-195 and Ser-201 by MAP kinase kinase kinases positively regulates kinase activity.

The catalysed reaction is L-seryl-[protein] + ATP = O-phospho-L-seryl-[protein] + ADP + H(+). It carries out the reaction L-threonyl-[protein] + ATP = O-phospho-L-threonyl-[protein] + ADP + H(+). It catalyses the reaction L-tyrosyl-[protein] + ATP = O-phospho-L-tyrosyl-[protein] + ADP + H(+). This chain is Mitogen-activated protein kinase kinase 8 (MKK8), found in Arabidopsis thaliana (Mouse-ear cress).